A 162-amino-acid chain; its full sequence is Cytochrome c-type biogenesis protein CcmE (162 aa).

Topologically, residues 1 to 8 (MNPRRKKR) are cytoplasmic. A helical; Signal-anchor for type II membrane protein transmembrane segment spans residues 9–29 (LTLAVALIGGVAAITSLLLYA). At 30-162 (LNSNLNLFYT…YSQQKAPDTK (133 aa)) the chain is on the periplasmic side. Residues His-131 and Tyr-135 each coordinate heme. Positions 142–162 (EAMGQKHEKLDYSQQKAPDTK) are disordered. Positions 153–162 (YSQQKAPDTK) are enriched in polar residues.

It belongs to the CcmE/CycJ family.

Its subcellular location is the cell inner membrane. In terms of biological role, heme chaperone required for the biogenesis of c-type cytochromes. Transiently binds heme delivered by CcmC and transfers the heme to apo-cytochromes in a process facilitated by CcmF and CcmH. The polypeptide is Cytochrome c-type biogenesis protein CcmE (Shewanella baltica (strain OS223)).